A 929-amino-acid polypeptide reads, in one-letter code: Dual serine/threonine and tyrosine protein kinase (929 aa).

Over residues 1-14 the composition is skewed to low complexity; sequence MEGDGVPWGSEPVS. The tract at residues 1–21 is disordered; the sequence is MEGDGVPWGSEPVSGPGPGGG. Coiled coils occupy residues 189-215 and 395-431; these read EEDLEVQENNEDAAHVLAELEVTMHHA and RKKENELYESLMNIANRKQEEMKDMIVETLNTMKEEL. Positions 652 to 906 constitute a Protein kinase domain; it reads PKLGQELGRG…PLLGIVQPML (255 aa). ATP is bound by residues 658–666 and Lys681; that span reads LGRGQYGVV. The active-site Proton acceptor is the Asp777.

Belongs to the protein kinase superfamily. Ser/Thr protein kinase family. As to expression, predominantly expressed in skeletal muscle and testis. Expressed in basolateral and apical membranes of all tubular epithelia. Expressed in thin ascending limb of the loop of Henle and the distal convoluted tubule. Expressed in all layers of transitional ureteric epithelium and in the ureteric smooth-muscle cells. Weakly expressed in heart, brain, placenta, kidney, pancreas, spleen, thymus, prostate, uterus, small intestine, white blood cells, stomach, spinal cord and adrenal gland. Is widely distributed in the CNS. Also detected in several tumor cell lines. Expressed in the skin.

The protein resides in the cytoplasm. It localises to the cell membrane. The protein localises to the apical cell membrane. It is found in the basolateral cell membrane. Its subcellular location is the cell junction. The catalysed reaction is L-seryl-[protein] + ATP = O-phospho-L-seryl-[protein] + ADP + H(+). It carries out the reaction L-threonyl-[protein] + ATP = O-phospho-L-threonyl-[protein] + ADP + H(+). It catalyses the reaction L-tyrosyl-[protein] + ATP = O-phospho-L-tyrosyl-[protein] + ADP + H(+). Acts as a positive regulator of ERK phosphorylation downstream of fibroblast growth factor-receptor activation. Involved in the regulation of both caspase-dependent apoptosis and caspase-independent cell death. In the skin, it plays a predominant role in suppressing caspase-dependent apoptosis in response to UV stress in a range of dermal cell types. The polypeptide is Dual serine/threonine and tyrosine protein kinase (DSTYK) (Homo sapiens (Human)).